Consider the following 440-residue polypeptide: Proline--tRNA ligase (440 aa).

This sequence belongs to the class-II aminoacyl-tRNA synthetase family. ProS type 2 subfamily. As to quaternary structure, homodimer.

The protein localises to the cytoplasm. It catalyses the reaction tRNA(Pro) + L-proline + ATP = L-prolyl-tRNA(Pro) + AMP + diphosphate. In terms of biological role, catalyzes the attachment of proline to tRNA(Pro) in a two-step reaction: proline is first activated by ATP to form Pro-AMP and then transferred to the acceptor end of tRNA(Pro). The polypeptide is Proline--tRNA ligase (Methylocella silvestris (strain DSM 15510 / CIP 108128 / LMG 27833 / NCIMB 13906 / BL2)).